We begin with the raw amino-acid sequence, 223 residues long: UPF0758 protein FMG_0357 (223 aa).

An MPN domain is found at 101-223; that stretch reads SLNDPDSVAE…SLSMRKGMYF (123 aa). Zn(2+)-binding residues include histidine 172, histidine 174, and aspartate 185. The JAMM motif motif lies at 172 to 185; it reads HNHPSGSLIPSNAD.

The protein belongs to the UPF0758 family.

This Finegoldia magna (strain ATCC 29328 / DSM 20472 / WAL 2508) (Peptostreptococcus magnus) protein is UPF0758 protein FMG_0357.